The primary structure comprises 621 residues: uncharacterized protein (621 aa).

The signal sequence occupies residues 1 to 15 (MRRSVCYVTPSVARA).

This sequence belongs to the chlamydial CPn_0512/CT_425/TC_0708 family.

This is an uncharacterized protein from Chlamydia trachomatis serovar D (strain ATCC VR-885 / DSM 19411 / UW-3/Cx).